Here is a 309-residue protein sequence, read N- to C-terminus: NADH-cytochrome b5 reductase 1 (309 aa).

A helical membrane pass occupies residues 30 to 50 (FVPYAVALTAILAGLKLFTGG). The FAD-binding FR-type domain occupies 60–165 (TEFQEFVLKE…RGPKGAMVYT (106 aa)). FAD contacts are provided by residues 145-160 (TTLK…GPKG) and 171-208 (HIGM…KLDL).

Belongs to the flavoprotein pyridine nucleotide cytochrome reductase family. In terms of assembly, monomer. Component of the 2-(3-amino-3-carboxypropyl)histidine synthase complex composed of dph1, dph2, dph3 and a NADH-dependent reductase, predominantly cbr1. The cofactor is FAD.

It localises to the mitochondrion outer membrane. It catalyses the reaction 2 Fe(III)-[cytochrome b5] + NADH = 2 Fe(II)-[cytochrome b5] + NAD(+) + H(+). It carries out the reaction 2 Fe(3+)-[Dph3] + NADH = 2 Fe(2+)-[Dph3] + NAD(+) + H(+). It functions in the pathway protein modification; peptidyl-diphthamide biosynthesis. Its function is as follows. NADH-dependent reductase for dph3 and cytochrome b5. Required for the first step of diphthamide biosynthesis, a post-translational modification of histidine which occurs in elongation factor 2. Dph1 and dph2 transfer a 3-amino-3-carboxypropyl (ACP) group from S-adenosyl-L-methionine (SAM) to a histidine residue, the reaction is assisted by a reduction system comprising dph3 and a NADH-dependent reductase, predominantly cbr1. By reducing dph3, also involved in the formation of the tRNA wobble base modification mcm5s 2U (5-methoxycarbonylmethyl-2-thiouridine), mediated by the elongator complex. The cytochrome b5/NADH cytochrome b5 reductase electron transfer system supports the catalytic activity of several sterol biosynthetic enzymes. This is NADH-cytochrome b5 reductase 1 (cbr1) from Neosartorya fischeri (strain ATCC 1020 / DSM 3700 / CBS 544.65 / FGSC A1164 / JCM 1740 / NRRL 181 / WB 181) (Aspergillus fischerianus).